Here is a 118-residue protein sequence, read N- to C-terminus: Large ribosomal subunit protein uL18 (118 aa).

A disordered region spans residues 1 to 24; it reads MISKPDKNKTRQRRHARVRGKISG. A compositionally biased stretch (basic residues) spans 10 to 20; that stretch reads TRQRRHARVRG.

This sequence belongs to the universal ribosomal protein uL18 family. Part of the 50S ribosomal subunit; part of the 5S rRNA/L5/L18/L25 subcomplex. Contacts the 5S and 23S rRNAs.

In terms of biological role, this is one of the proteins that bind and probably mediate the attachment of the 5S RNA into the large ribosomal subunit, where it forms part of the central protuberance. This Lactiplantibacillus plantarum (strain ATCC BAA-793 / NCIMB 8826 / WCFS1) (Lactobacillus plantarum) protein is Large ribosomal subunit protein uL18.